Here is a 138-residue protein sequence, read N- to C-terminus: Large ribosomal subunit protein bL17 (138 aa).

It belongs to the bacterial ribosomal protein bL17 family. Part of the 50S ribosomal subunit. Contacts protein L32.

This Phenylobacterium zucineum (strain HLK1) protein is Large ribosomal subunit protein bL17.